Here is a 439-residue protein sequence, read N- to C-terminus: Cell division protein DivIB (439 aa).

Disordered stretches follow at residues 1 to 96 (MDDK…DSNI) and 119 to 149 (DNEQ…KSKV). Residues 1–173 (MDDKTKNDQQ…RRKRQKRIQY (173 aa)) lie on the Cytoplasmic side of the membrane. The span at 11-20 (ESNEDKDELE) shows a compositional bias: acidic residues. Positions 26–38 (TSKKRRQRKRSKA) are enriched in basic residues. Residues 64 to 76 (KDFKKEESNDKNN) show a composition bias toward basic and acidic residues. A compositionally biased stretch (low complexity) spans 77–86 (DSASSHANDN). Acidic residues predominate over residues 87–96 (NIDDSTDSNI). Residues 119–133 (DNEQPQSAPKEQNSD) are compositionally biased toward polar residues. Residues 174 to 194 (SVITILVLLIAVILIYMFSPL) form a helical membrane-spanning segment. The 69-residue stretch at 195-263 (SKIAHVNING…NTLNVDITEN (69 aa)) folds into the POTRA domain. Over 195-439 (SKIAHVNING…KINKQSSKNN (245 aa)) the chain is Extracellular. A disordered region spans residues 396–439 (YRGNTSSQSESDKNVTKSSQEENQAKEELQSVLNKINKQSSKNN). Basic and acidic residues predominate over residues 405–424 (ESDKNVTKSSQEENQAKEEL). A compositionally biased stretch (polar residues) spans 426–439 (SVLNKINKQSSKNN).

The protein belongs to the FtsQ/DivIB family. DivIB subfamily.

The protein resides in the cell membrane. Cell division protein that may be involved in stabilizing or promoting the assembly of the division complex. The sequence is that of Cell division protein DivIB from Staphylococcus aureus (strain NCTC 8325 / PS 47).